The primary structure comprises 223 residues: Phosphoribosylformylglycinamidine synthase subunit PurQ (223 aa).

The region spanning 3–223 is the Glutamine amidotransferase type-1 domain; the sequence is FAVLVFPGSN…MVKSWREQHV (221 aa). C85 serves as the catalytic Nucleophile. Active-site residues include H193 and E195.

As to quaternary structure, part of the FGAM synthase complex composed of 1 PurL, 1 PurQ and 2 PurS subunits.

The protein localises to the cytoplasm. The catalysed reaction is N(2)-formyl-N(1)-(5-phospho-beta-D-ribosyl)glycinamide + L-glutamine + ATP + H2O = 2-formamido-N(1)-(5-O-phospho-beta-D-ribosyl)acetamidine + L-glutamate + ADP + phosphate + H(+). It catalyses the reaction L-glutamine + H2O = L-glutamate + NH4(+). It participates in purine metabolism; IMP biosynthesis via de novo pathway; 5-amino-1-(5-phospho-D-ribosyl)imidazole from N(2)-formyl-N(1)-(5-phospho-D-ribosyl)glycinamide: step 1/2. Part of the phosphoribosylformylglycinamidine synthase complex involved in the purines biosynthetic pathway. Catalyzes the ATP-dependent conversion of formylglycinamide ribonucleotide (FGAR) and glutamine to yield formylglycinamidine ribonucleotide (FGAM) and glutamate. The FGAM synthase complex is composed of three subunits. PurQ produces an ammonia molecule by converting glutamine to glutamate. PurL transfers the ammonia molecule to FGAR to form FGAM in an ATP-dependent manner. PurS interacts with PurQ and PurL and is thought to assist in the transfer of the ammonia molecule from PurQ to PurL. This Staphylococcus aureus (strain bovine RF122 / ET3-1) protein is Phosphoribosylformylglycinamidine synthase subunit PurQ.